A 476-amino-acid polypeptide reads, in one-letter code: Fatty acid hydroperoxide lyase, chloroplastic (476 aa).

A helical membrane pass occupies residues 280–300; sequence LLFILGFNAFGGFSIFLPTLL. Cys438 is a binding site for heme.

The protein belongs to the cytochrome P450 family. Requires heme as cofactor. As to expression, highly expressed in developing flowers and in young leaves. Detected in stems and immature green fruits, but not in mature green and red fruits.

It localises to the plastid. Its subcellular location is the chloroplast outer membrane. Reversibly inhibited by nordihydroguaiaretic acid (NDGA) and irreversibly by salicylic acid. Functionally, cytochrome P450 of the CYP74B subfamily involved in the biosynthesis of traumatin and C6 aldehydes. Metabolizes 13- but not 9-hydroperoxides of linoleic and linolenic acids. Can use 15S-hydroperoxy-11(Z),13(E),17(Z)-eicosatrienoic acid (15-HPET) and 13S-hydroperoxy-9(Z),11(E),15(Z)-octadecatrienoic acid (13-HPOT) as substrates, but only 5% activity with 13S-hydroperoxy-9(Z),11(E)-octadecadienoic acid (13-HPOD). Produces n-hexanal and 12-oxo-9(Z)-dodecanoic acid from 13-HPOD. The chain is Fatty acid hydroperoxide lyase, chloroplastic from Solanum lycopersicum (Tomato).